Here is a 369-residue protein sequence, read N- to C-terminus: Serine/threonine-protein phosphatase PP2A-1 catalytic subunit (369 aa).

The interval 1-57 (MDTDLDVPMQDAVTEQLTPTVSEDMDLNNNSSDNNAEEFSVDDLKPGSSGIADHKSS) is disordered. Residues D117, H119, D145, and N177 each contribute to the Mn(2+) site. The Proton donor role is filled by H178. Mn(2+)-binding residues include H227 and H301. The tract at residues 348-369 (QYDPSVRPGEPSVSRKTPDYFL) is disordered. Leucine methyl ester is present on L369.

This sequence belongs to the PPP phosphatase family. PP-2A subfamily. Inactivated in a complex with phosphatase methylesterase PPE1 (PP2Ai). Interacts with phosphatase 2A activator RRD2, which can reactivate PP2Ai by dissociating the catalytic subunit from the complex. Forms a ternary complex with RRD2-TAP42. It depends on Mn(2+) as a cofactor. Post-translationally, reversibly methyl esterified on Leu-369 by leucine carboxyl methyltransferase 1 (PPM1) and protein phosphatase methylesterase 1 (PPE1). Carboxyl methylation influences the affinity of the catalytic subunit for the different regulatory subunits, thereby modulating the PP2A holoenzyme's substrate specificity, enzyme activity and cellular localization.

The catalysed reaction is O-phospho-L-seryl-[protein] + H2O = L-seryl-[protein] + phosphate. It catalyses the reaction O-phospho-L-threonyl-[protein] + H2O = L-threonyl-[protein] + phosphate. Its function is as follows. Exact function not known, phosphatase 2A performs an essential cellular function. This chain is Serine/threonine-protein phosphatase PP2A-1 catalytic subunit (PPH21), found in Saccharomyces cerevisiae (strain ATCC 204508 / S288c) (Baker's yeast).